Consider the following 791-residue polypeptide: Diacylglycerol kinase gamma (791 aa).

Disordered stretches follow at residues 82-103 and 117-154; these read KPRHETSDHPTEGASNSEANSA and DEACAPDTESNMAEKQAPAEDQVAATPLEPPVPRSSSS. Residues 83–92 show a composition bias toward basic and acidic residues; the sequence is PRHETSDHPT. The span at 94-103 shows a compositional bias: polar residues; sequence GASNSEANSA. 2 consecutive EF-hand domains span residues 175–210 and 220–255; these read RPQDKLEFMFRLYDSDENGLLDQAEMDCIVNQMLHI and ELRPILKEMLQGMDYDRDGFVSLQEWVHGGMTTIPL. Ca(2+) contacts are provided by Asp-188, Asp-190, Asn-192, Glu-199, Asp-233, Asp-235, Asp-237, and Glu-244. Phorbol-ester/DAG-type zinc fingers lie at residues 271–321 and 336–385; these read RHAW…IPGC and QHAW…LCDG. The region spanning 430-564 is the DAGKc domain; the sequence is PGTHPLLVLV…LDRWHLEVIP (135 aa). A disordered region spans residues 768 to 791; the sequence is APMMMGPPQKSSFFSLRRKSRSKD.

It belongs to the eukaryotic diacylglycerol kinase family. Predominantly expressed in retina and in a much lesser extent in the brain. Other tissues contain extremely low levels of DGK-gamma.

Its subcellular location is the membrane. It localises to the cytoplasm. The protein resides in the cytosol. The protein localises to the cytoskeleton. It carries out the reaction a 1,2-diacyl-sn-glycerol + ATP = a 1,2-diacyl-sn-glycero-3-phosphate + ADP + H(+). The enzyme catalyses 1,2-didecanoyl-sn-glycerol + ATP = 1,2-didecanoyl-sn-glycero-3-phosphate + ADP + H(+). The catalysed reaction is 1-octadecanoyl-2-(5Z,8Z,11Z,14Z-eicosatetraenoyl)-sn-glycerol + ATP = 1-octadecanoyl-2-(5Z,8Z,11Z,14Z-eicosatetraenoyl)-sn-glycero-3-phosphate + ADP + H(+). It catalyses the reaction 1,2-di-(9Z-octadecenoyl)-sn-glycerol + ATP = 1,2-di-(9Z-octadecenoyl)-sn-glycero-3-phosphate + ADP + H(+). It carries out the reaction 1-octadecanoyl-2-(9Z,12Z)-octadecadienoyl-sn-glycerol + ATP = 1-octadecanoyl-2-(9Z,12Z-octadecadienoyl)-sn-glycero-3-phosphate + ADP + H(+). Its pathway is lipid metabolism; glycerolipid metabolism. With respect to regulation, the activity is calcium-dependent. Requires phosphatidylserine for maximal activity. Its function is as follows. Diacylglycerol kinase that converts diacylglycerol/DAG into phosphatidic acid/phosphatidate/PA and regulates the respective levels of these two bioactive lipids. Thereby, acts as a central switch between the signaling pathways activated by these second messengers with different cellular targets and opposite effects in numerous biological processes. Has no apparent specificity with regard to the acyl compositions of diacylglycerol. Specifically expressed in the cerebellum where it controls the level of diacylglycerol which in turn regulates the activity of protein kinase C gamma. Through protein kinase C gamma, indirectly regulates the dendritic development of Purkinje cells, cerebellar long term depression and ultimately cerebellar motor coordination. This Homo sapiens (Human) protein is Diacylglycerol kinase gamma (DGKG).